The following is a 490-amino-acid chain: Serine palmitoyltransferase 2 (490 aa).

The helical transmembrane segment at 10–30 (VDDVGYLPILFLYIAYAFIIF) threads the bilayer. Lysine 321 carries the post-translational modification N6-(pyridoxal phosphate)lysine.

It belongs to the class-II pyridoxal-phosphate-dependent aminotransferase family. Forms a heterodimer with sptA. The cofactor is pyridoxal 5'-phosphate.

The protein resides in the endoplasmic reticulum membrane. It carries out the reaction L-serine + hexadecanoyl-CoA + H(+) = 3-oxosphinganine + CO2 + CoA. The protein operates within lipid metabolism; sphingolipid metabolism. Functionally, catalytic subunit of serine palmitoyltransferase (SPT), which catalyzes the committed step in the synthesis of sphingolipids, the condensation of serine with palmitoyl CoA to form the long chain base 3-ketosphinganine. The protein is Serine palmitoyltransferase 2 (sptB) of Dictyostelium discoideum (Social amoeba).